The sequence spans 426 residues: MKYVSINPTKLEGQVKIPPSKSVCHRALICASLSSGVSNITNVDFSEDIEATCEALKSLGVIIEKGNNSLSIKGNSNLYVKKPNVHCFQSGSTLRFLIPLAATLGEEITFTGEGKLVERPLNVYYDIFKSQKIYYKTESGKLPLTINGKLKSGDYRVRGDVSSQFVTGLLFALPLLSGDSKIEITTELESKSYVDITIDMLGKFGVCVDGSSYREFIIKGNQTYKEVDCNIEGDFSQVAFWLVMGALGKGITCMGLDTDSLQGDRIIVHILKDMGVEIEEKENCIEVNPSKTTGVVIDVSQCPDLVPVLAALASVSHGTTEIINAARLRIKESDRLKAITSELNKIGAEVIEKEDSLIIHGKENLKGGNVTSWKDHRIAMALAAVSSKCTEPLVIEGAECVKKSYPGFWEDFRSLGGEIDEWSVGK.

3-phosphoshikimate contacts are provided by K21, S22, and R26. K21 lines the phosphoenolpyruvate pocket. Residues G91 and R119 each coordinate phosphoenolpyruvate. S162, S163, Q164, S190, D304, and K331 together coordinate 3-phosphoshikimate. Q164 is a phosphoenolpyruvate binding site. The Proton acceptor role is filled by D304. Positions 335, 377, and 403 each coordinate phosphoenolpyruvate.

It belongs to the EPSP synthase family. In terms of assembly, monomer.

Its subcellular location is the cytoplasm. The enzyme catalyses 3-phosphoshikimate + phosphoenolpyruvate = 5-O-(1-carboxyvinyl)-3-phosphoshikimate + phosphate. Its pathway is metabolic intermediate biosynthesis; chorismate biosynthesis; chorismate from D-erythrose 4-phosphate and phosphoenolpyruvate: step 6/7. Functionally, catalyzes the transfer of the enolpyruvyl moiety of phosphoenolpyruvate (PEP) to the 5-hydroxyl of shikimate-3-phosphate (S3P) to produce enolpyruvyl shikimate-3-phosphate and inorganic phosphate. This chain is 3-phosphoshikimate 1-carboxyvinyltransferase, found in Clostridium kluyveri (strain ATCC 8527 / DSM 555 / NBRC 12016 / NCIMB 10680 / K1).